Consider the following 169-residue polypeptide: MYTSGYANRSSSFPTTTHNAARTATENAAAGLVSEVVYHEDQPMMAQLLLLPLLRQLGQQSRWQLWLTPQQKLSREWVQSSGLPLTKVMQISQLAPRHTLESMIRALRTGNYSVVIGWMTEELTEEEHASLVEAAKVGNAVGFIMRPVRAHALSRRQHSGLKIHSNLYH.

The tract at residues 106-112 is ftsZ binding; the sequence is ALRTGNY. The tract at residues 162-169 is lon protease binding; the sequence is KIHSNLYH.

The protein belongs to the SulA family. As to quaternary structure, interacts with FtsZ. Post-translationally, is rapidly cleaved and degraded by the Lon protease once DNA damage is repaired.

Its function is as follows. Component of the SOS system and an inhibitor of cell division. Accumulation of SulA causes rapid cessation of cell division and the appearance of long, non-septate filaments. In the presence of GTP, binds a polymerization-competent form of FtsZ in a 1:1 ratio, thus inhibiting FtsZ polymerization and therefore preventing it from participating in the assembly of the Z ring. This mechanism prevents the premature segregation of damaged DNA to daughter cells during cell division. The polypeptide is Cell division inhibitor SulA (Salmonella dublin (strain CT_02021853)).